The sequence spans 177 residues: Probable chemoreceptor glutamine deamidase CheD (177 aa).

The protein belongs to the CheD family.

The enzyme catalyses L-glutaminyl-[protein] + H2O = L-glutamyl-[protein] + NH4(+). In terms of biological role, probably deamidates glutamine residues to glutamate on methyl-accepting chemotaxis receptors (MCPs), playing an important role in chemotaxis. The chain is Probable chemoreceptor glutamine deamidase CheD from Pseudomonas fluorescens (strain SBW25).